We begin with the raw amino-acid sequence, 216 residues long: Probable phosphatase SPAC513.02 (216 aa).

H15 acts as the Tele-phosphohistidine intermediate in catalysis.

This sequence belongs to the phosphoglycerate mutase family. BPG-dependent PGAM subfamily.

The protein localises to the cytoplasm. The protein resides in the nucleus. The chain is Probable phosphatase SPAC513.02 from Schizosaccharomyces pombe (strain 972 / ATCC 24843) (Fission yeast).